A 363-amino-acid polypeptide reads, in one-letter code: MQLLQSSVIAATVGAALVAAVPVELEARDSCTFTSAADAKSGKTSCSTITLSNIEVPAGETLDLTGLNDGTTVIFSGETTFGYKEWEGPLISVSGTNIKVQQASGAKIDGDGSRWWDGKGGNGGKTKPKFCYVHKLDSSSITGLQIYNTPVQGFSIQSDNLNITDVTIDNSAGTAEGHNTDAFDVGSSTYINIDGATVYNQDDCLAINSGSHITFTNGYCDGGHGLSIGSVGGRSDNTVEDVTISNSKVVNSQNGVRIKTVYDATGTVSNVKFEDITLSGITKYGLIVEQDYENGSPTGTPTNGIKVSDITFDKVTGTVESDATDIYILCGSGSCTDWTWSGVSITGGKTSSKCENVPTGASC.

Positions 1–20 (MQLLQSSVIAATVGAALVAA) are cleaved as a signal peptide. The propeptide occupies 21–28 (VPVELEAR). A disulfide bridge links cysteine 31 with cysteine 46. PbH1 repeat units follow at residues 158–187 (SDNL…DVGS), 188–209 (STYI…AINS), 210–230 (GSHI…SIGS), 239–260 (VEDV…RIKT), 268–290 (VSNV…IVEQ), and 302–347 (TNGI…SITG). N-linked (GlcNAc...) asparagine glycosylation occurs at asparagine 162. Aspartate 202 functions as the Proton donor in the catalytic mechanism. Residues cysteine 204 and cysteine 220 are joined by a disulfide bond. The active site involves histidine 224. Intrachain disulfides connect cysteine 330–cysteine 335 and cysteine 354–cysteine 363.

It belongs to the glycosyl hydrolase 28 family.

The protein resides in the secreted. It carries out the reaction (1,4-alpha-D-galacturonosyl)n+m + H2O = (1,4-alpha-D-galacturonosyl)n + (1,4-alpha-D-galacturonosyl)m.. In terms of biological role, involved in maceration and soft-rotting of plant tissue. Hydrolyzes the 1,4-alpha glycosidic bonds of de-esterified pectate in the smooth region of the plant cell wall. In Aspergillus flavus (strain ATCC MYA-384 / AF70), this protein is Endopolygalacturonase A (pgaA).